The following is a 493-amino-acid chain: MDFIVAIFALFVISSFTITSTNAVEASTLLDIGNLSRSSFPRGFIFGAGSSAYQFEGAVNEGGRGPSIWDTFTHKYPEKIRDGSNADITVDQYHRYKEDVGIMKDQNMDSYRFSISWPRILPKGKLSGGINHEGIKYYNNLINELLANGIQPFVTLFHWDLPQVLEDEYGGFLNSGVINDFRDYTDLCFKEFGDRVRYWSTLNEPWVFSNSGYALGTNAPGRCSASNVAKPGDSGTGPYIVTHNQILAHAEAVHVYKTKYQAYQKGKIGITLVSNWLMPLDDNSIPDIKAAERSLDFQFGLFMEQLTTGDYSKSMRRIVKNRLPKFSKFESSLVNGSFDFIGINYYSSSYISNAPSHGNAKPSYSTNPMTNISFEKHGIPLGPRAASIWIYVYPYMFIQEDFEIFCYILKINITILQFSITENGMNEFNDATLPVEEALLNTYRIDYYYRHLYYIRSAIRAGSNVKGFYAWSFLDCNEWFAGFTVRFGLNFVD.

The signal sequence occupies residues 1 to 18; sequence MDFIVAIFALFVISSFTI. N-linked (GlcNAc...) asparagine glycosylation is present at N34. Residues Q54, H158, and 203–204 contribute to the a beta-D-glucoside site; that span reads NE. E204 (proton donor) is an active-site residue. N-linked (GlcNAc...) asparagine glycosylation is present at N335. Y346 serves as a coordination point for a beta-D-glucoside. N-linked (GlcNAc...) asparagine glycans are attached at residues N371 and N412. A beta-D-glucoside contacts are provided by residues E422, W471, 478 to 479, and F487; that span reads EW. The active-site Nucleophile is the E422.

Belongs to the glycosyl hydrolase 1 family. In terms of tissue distribution, leaves.

The catalysed reaction is Hydrolysis of terminal, non-reducing beta-D-glucosyl residues with release of beta-D-glucose.. The polypeptide is Non-cyanogenic beta-glucosidase (Trifolium repens (Creeping white clover)).